The primary structure comprises 506 residues: Apolipoprotein N-acyltransferase (506 aa).

6 helical membrane-spanning segments follow: residues Phe-26–Ile-46, Phe-66–Ala-86, Leu-89–Ser-109, Phe-113–Ala-133, Gly-166–Ile-186, and Met-192–Val-212. A CN hydrolase domain is found at Ile-225 to Pro-471. The Proton acceptor role is filled by Glu-264. Lys-330 is a catalytic residue. Cys-382 functions as the Nucleophile in the catalytic mechanism. The chain crosses the membrane as a helical span at residues His-479–Trp-499.

Belongs to the CN hydrolase family. Apolipoprotein N-acyltransferase subfamily.

It localises to the cell inner membrane. The enzyme catalyses N-terminal S-1,2-diacyl-sn-glyceryl-L-cysteinyl-[lipoprotein] + a glycerophospholipid = N-acyl-S-1,2-diacyl-sn-glyceryl-L-cysteinyl-[lipoprotein] + a 2-acyl-sn-glycero-3-phospholipid + H(+). The protein operates within protein modification; lipoprotein biosynthesis (N-acyl transfer). Catalyzes the phospholipid dependent N-acylation of the N-terminal cysteine of apolipoprotein, the last step in lipoprotein maturation. This is Apolipoprotein N-acyltransferase from Vibrio vulnificus (strain CMCP6).